A 198-amino-acid polypeptide reads, in one-letter code: UPF0548 protein DR_2035 (198 aa).

The protein belongs to the UPF0548 family.

The protein is UPF0548 protein DR_2035 of Deinococcus radiodurans (strain ATCC 13939 / DSM 20539 / JCM 16871 / CCUG 27074 / LMG 4051 / NBRC 15346 / NCIMB 9279 / VKM B-1422 / R1).